The sequence spans 417 residues: MDVERLQEALKDFEKRGKKEVCPVLDQFLCHVAKTGETMIQWSQFKGYFIFKLEKVMDDFRTSAPEPRGPPNPNVEYIPFDEMKERILKIVTGFNGIPFTIQRLCELLTDPRRNYTGTDKFLRGVEKNVMVVSCVYPSSEKNNSNSLNRMNGVMFPGNSPSYTERSNINGPGTPRPLNRPKVSLSAPMTTNGLPESTDSKEANLQQNEEKNHSDSSTSESEVSSVSPLKNKHPDEDAVEAEGHEVKRLRFDKEGEVRETASQTTSSEISSVMVGETEASSSSQDKDKDSRCTRQHCTEEDEEEDEEEEEESFMTSREMIPERKNQEKESDDALTVNEETSEENNQMEESDVSQAEKDLLHSEGSENEGPVSSSSSDCRETEELVGSNSSKTGEILSESSMENDDEATEVTDEPMEQD.

Polar residues-rich tracts occupy residues 140–149, 158–170, and 186–196; these read EKNNSNSLNR, NSPS…NING, and APMTTNGLPES. The tract at residues 140-417 is disordered; that stretch reads EKNNSNSLNR…EVTDEPMEQD (278 aa). The residue at position 159 (Ser159) is a Phosphoserine. Residues 197–213 show a composition bias toward basic and acidic residues; it reads TDSKEANLQQNEEKNHS. Residues 214–226 are compositionally biased toward low complexity; sequence DSSTSESEVSSVS. At Ser226 the chain carries Phosphoserine. The segment covering 231 to 258 has biased composition (basic and acidic residues); the sequence is KHPDEDAVEAEGHEVKRLRFDKEGEVRE. Residues 259 to 269 show a composition bias toward polar residues; it reads TASQTTSSEIS. Residues 283–297 are compositionally biased toward basic and acidic residues; it reads QDKDKDSRCTRQHCT. Acidic residues predominate over residues 298–311; sequence EEDEEEDEEEEEES. The span at 318-327 shows a compositional bias: basic and acidic residues; that stretch reads MIPERKNQEK. Residues 338-350 show a composition bias toward acidic residues; it reads ETSEENNQMEESD. Residues 353-363 show a composition bias toward basic and acidic residues; it reads QAEKDLLHSEG. Over residues 366–375 the composition is skewed to low complexity; it reads NEGPVSSSSS. Residues 385 to 399 are compositionally biased toward polar residues; sequence GSNSSKTGEILSESS. Positions 400 to 417 are enriched in acidic residues; the sequence is MENDDEATEVTDEPMEQD.

This sequence belongs to the PPP4R2 family. Serine/threonine-protein phosphatase 4 (PP4) occurs in different assemblies of the catalytic and one or more regulatory subunits. Component of the PP4 complexes PPP4C-PPP4R2, PPP4C-PPP4R2-PPP4R3A and PPP4C-PPP4R2-PPP4R3B. The PPP4C-PPP4R2 complex appears to be a tetramer composed of 2 molecules of PPP4C and 2 molecules of PPP4R2. Interacts with DDX20/GEMIN3 and GEMIN4. Interacts with RPA2; this DNA damage-dependent interaction recruits PPP4C leading to RPA2 dephosphorylation. As to expression, widely expressed.

It localises to the cytoplasm. Its subcellular location is the cytoskeleton. It is found in the microtubule organizing center. The protein resides in the centrosome. The protein localises to the nucleus. Functionally, regulatory subunit of serine/threonine-protein phosphatase 4 (PP4). May regulate the activity of PPP4C at centrosomal microtubule organizing centers. Its interaction with the SMN complex leads to enhance the temporal localization of snRNPs, suggesting a role of PPP4C in maturation of spliceosomal snRNPs. The PPP4C-PPP4R2-PPP4R3A PP4 complex specifically dephosphorylates H2AX phosphorylated on 'Ser-140' (gamma-H2AX) generated during DNA replication and required for DNA double strand break repair. Mediates RPA2 dephosphorylation by recruiting PPP4C to RPA2 in a DNA damage-dependent manner. RPA2 dephosphorylation is required for the efficient RPA2-mediated recruitment of RAD51 to chromatin following double strand breaks, an essential step for DNA repair. The chain is Serine/threonine-protein phosphatase 4 regulatory subunit 2 (PPP4R2) from Homo sapiens (Human).